We begin with the raw amino-acid sequence, 623 residues long: tRNA uridine 5-carboxymethylaminomethyl modification enzyme MnmG (623 aa).

12–17 (GAGHAG) is an FAD binding site. Position 272 to 286 (272 to 286 (GPRYCPSIEDKINRF)) interacts with NAD(+).

This sequence belongs to the MnmG family. Homodimer. Heterotetramer of two MnmE and two MnmG subunits. The cofactor is FAD.

It localises to the cytoplasm. Functionally, NAD-binding protein involved in the addition of a carboxymethylaminomethyl (cmnm) group at the wobble position (U34) of certain tRNAs, forming tRNA-cmnm(5)s(2)U34. This Flavobacterium psychrophilum (strain ATCC 49511 / DSM 21280 / CIP 103535 / JIP02/86) protein is tRNA uridine 5-carboxymethylaminomethyl modification enzyme MnmG.